A 229-amino-acid polypeptide reads, in one-letter code: (S)-2-haloacid dehalogenase 2 (229 aa).

D10 acts as the Nucleophile in catalysis. An (S)-2-haloacid is bound by residues 11 to 12 (LY), R41, and 118 to 119 (SN). The interval 175-180 (SSNAWD) is important for catalytic activity.

This sequence belongs to the HAD-like hydrolase superfamily. S-2-haloalkanoic acid dehalogenase family.

It carries out the reaction an (S)-2-haloacid + H2O = a (2R)-2-hydroxycarboxylate + a halide anion + H(+). It catalyses the reaction (S)-2-chloropropanoate + H2O = (R)-lactate + chloride + H(+). Its function is as follows. Catalyzes the hydrolytic dehalogenation of small (S)-2-haloalkanoic acids to yield the corresponding (R)-2-hydroxyalkanoic acids. Acts on acids of short chain lengths, C(2) to C(4), with inversion of configuration at C-2. Active with 2-halogenated carboxylic acids and converts only the S-isomer (or L-isomer) of 2-chloropropionic acid with inversion of configuration to produce R-lactate (or D-isomer). The polypeptide is (S)-2-haloacid dehalogenase 2 (Pseudomonas sp. (strain CBS-3)).